The sequence spans 555 residues: Alpha-1,2-mannosyltransferase ALG9 (555 aa).

Residues 1-7 (MNCKAVT) lie on the Cytoplasmic side of the membrane. The helical transmembrane segment at 8–28 (ISLLLLLFLTRVYIQPTFSLI) threads the bilayer. The Lumenal portion of the chain corresponds to 29–62 (SDCDETFNYWEPLNLLVRGFGKQTWEYSPEYSIR). The helical transmembrane segment at 63–83 (SWAFLLPFYCILYPVNKFTDL) threads the bilayer. Residues 84-86 (ESH) lie on the Cytoplasmic side of the membrane. Residues 87-107 (WNFFITRACLGFFSFIMEFKL) traverse the membrane as a helical segment. Residues 108–113 (HREIAG) lie on the Lumenal side of the membrane. A helical transmembrane segment spans residues 114–134 (SLALQIANIWIIFQLFNPGWF). At 135 to 176 (HASVELLPSAVAMLLYVGATRHSLRYLSTGSTSNFTKSLAYN) the chain is on the cytoplasmic side. A helical transmembrane segment spans residues 177–197 (FLASILGWPFVLILSLPLCLH). Residues 198-213 (YLFNHRIISTIRTAFD) lie on the Lumenal side of the membrane. The chain crosses the membrane as a helical span at residues 214–234 (CCLIFSLTAFAVIVTDSIFYG). Residues 235–268 (KLAPVSWNILFYNVINASEESGPNIFGVEPWYYY) are Cytoplasmic-facing. The helical transmembrane segment at 269–289 (PLNLLLNFPLPVLVLAILGIF) threads the bilayer. At 290-316 (HLRLWPLWASLFTWIAVFTQQPHKEER) the chain is on the lumenal side. A helical membrane pass occupies residues 317–337 (FLYPIYGLITLSASIAFYKVL). Topologically, residues 338–349 (NLFNRKPILKKG) are cytoplasmic. Residues 350–370 (IKLSVLLIVAGQAMSRIVALV) form a helical membrane-spanning segment. Residues 371 to 555 (NNYTAPIAVY…LFEKPTETTN (185 aa)) are Lumenal-facing.

This sequence belongs to the glycosyltransferase 22 family.

It is found in the endoplasmic reticulum membrane. The catalysed reaction is an alpha-D-Man-(1-&gt;2)-alpha-D-Man-(1-&gt;2)-alpha-D-Man-(1-&gt;3)-[alpha-D-Man-(1-&gt;3)-alpha-D-Man-(1-&gt;6)]-beta-D-Man-(1-&gt;4)-beta-D-GlcNAc-(1-&gt;4)-alpha-D-GlcNAc-diphospho-di-trans,poly-cis-dolichol + a di-trans,poly-cis-dolichyl beta-D-mannosyl phosphate = an alpha-D-Man-(1-&gt;2)-alpha-D-Man-(1-&gt;2)-alpha-D-Man-(1-&gt;3)-[alpha-D-Man-(1-&gt;2)-alpha-D-Man-(1-&gt;3)-alpha-D-Man-(1-&gt;6)]-beta-D-Man-(1-&gt;4)-beta-D-GlcNAc-(1-&gt;4)-alpha-D-GlcNAc-diphospho-di-trans,poly-cis-dolichol + a di-trans,poly-cis-dolichyl phosphate + H(+). It carries out the reaction an alpha-D-Man-(1-&gt;2)-alpha-D-Man-(1-&gt;2)-alpha-D-Man-(1-&gt;3)-[alpha-D-Man-(1-&gt;2)-alpha-D-Man-(1-&gt;3)-[alpha-D-Man-(1-&gt;6)]-alpha-D-Man-(1-&gt;6)]-beta-D-Man-(1-&gt;4)-beta-D-GlcNAc-(1-&gt;4)-alpha-D-GlcNAc-diphospho-di-trans,poly-cis-dolichol + a di-trans,poly-cis-dolichyl beta-D-mannosyl phosphate = an alpha-D-Man-(1-&gt;2)-alpha-D-Man-(1-&gt;2)-alpha-D-Man-(1-&gt;3)-[alpha-D-Man-(1-&gt;2)-alpha-D-Man-(1-&gt;3)-[alpha-D-Man-(1-&gt;2)-alpha-D-Man-(1-&gt;6)]-alpha-D-Man-(1-&gt;6)]-beta-D-Man-(1-&gt;4)-beta-D-GlcNAc-(1-&gt;4)-alpha-D-GlcNAc-diphospho-di-trans,poly-cis-dolichol + a di-trans,poly-cis-dolichyl phosphate + H(+). Its pathway is protein modification; protein glycosylation. Mannosyltransferase that operates in the biosynthetic pathway of dolichol-linked oligosaccharides, the glycan precursors employed in protein asparagine (N)-glycosylation. The assembly of dolichol-linked oligosaccharides begins on the cytosolic side of the endoplasmic reticulum membrane and finishes in its lumen. The sequential addition of sugars to dolichol pyrophosphate produces dolichol-linked oligosaccharides containing fourteen sugars, including two GlcNAcs, nine mannoses and three glucoses. Once assembled, the oligosaccharide is transferred from the lipid to nascent proteins by oligosaccharyltransferases. In the lumen of the endoplasmic reticulum, catalyzes the addition of the seventh and ninth alpha-1,2-linked mannose residues to Man(6)GlcNAc(2)-PP-dolichol and Man(8)GlcNAc(2)-PP-dolichol respectively. This Saccharomyces cerevisiae (strain ATCC 204508 / S288c) (Baker's yeast) protein is Alpha-1,2-mannosyltransferase ALG9 (ALG9).